The primary structure comprises 381 residues: UDP-4-amino-4-deoxy-L-arabinose--oxoglutarate aminotransferase (381 aa).

An N6-(pyridoxal phosphate)lysine modification is found at K182.

This sequence belongs to the DegT/DnrJ/EryC1 family. ArnB subfamily. Homodimer. Pyridoxal 5'-phosphate serves as cofactor.

The enzyme catalyses UDP-4-amino-4-deoxy-beta-L-arabinose + 2-oxoglutarate = UDP-beta-L-threo-pentopyranos-4-ulose + L-glutamate. It participates in nucleotide-sugar biosynthesis; UDP-4-deoxy-4-formamido-beta-L-arabinose biosynthesis; UDP-4-deoxy-4-formamido-beta-L-arabinose from UDP-alpha-D-glucuronate: step 2/3. Its pathway is bacterial outer membrane biogenesis; lipopolysaccharide biosynthesis. Catalyzes the conversion of UDP-4-keto-arabinose (UDP-Ara4O) to UDP-4-amino-4-deoxy-L-arabinose (UDP-L-Ara4N). The modified arabinose is attached to lipid A and is required for resistance to polymyxin and cationic antimicrobial peptides. This is UDP-4-amino-4-deoxy-L-arabinose--oxoglutarate aminotransferase from Proteus mirabilis (strain HI4320).